Here is a 231-residue protein sequence, read N- to C-terminus: 7-cyano-7-deazaguanine synthase (231 aa).

Residue 7–17 (LSSGLDSVAAL) coordinates ATP. Zn(2+)-binding residues include cysteine 195, cysteine 203, cysteine 206, and cysteine 209.

Belongs to the QueC family. Requires Zn(2+) as cofactor.

It catalyses the reaction 7-carboxy-7-deazaguanine + NH4(+) + ATP = 7-cyano-7-deazaguanine + ADP + phosphate + H2O + H(+). It functions in the pathway purine metabolism; 7-cyano-7-deazaguanine biosynthesis. Catalyzes the ATP-dependent conversion of 7-carboxy-7-deazaguanine (CDG) to 7-cyano-7-deazaguanine (preQ(0)). This chain is 7-cyano-7-deazaguanine synthase, found in Methanosarcina mazei (strain ATCC BAA-159 / DSM 3647 / Goe1 / Go1 / JCM 11833 / OCM 88) (Methanosarcina frisia).